The following is a 171-amino-acid chain: uncharacterized protein (171 aa).

The helical transmembrane segment at 21 to 43 (GVAASLLILLAVYTIFQSTVVIA) threads the bilayer.

Its subcellular location is the membrane. This is an uncharacterized protein from Archaeoglobus fulgidus (strain ATCC 49558 / DSM 4304 / JCM 9628 / NBRC 100126 / VC-16).